The chain runs to 175 residues: Sec-independent protein translocase protein TatB (175 aa).

Residues 1 to 21 (MFDIGWSELVLIGVVALIAIG) form a helical membrane-spanning segment. 2 disordered regions span residues 100–132 (KPAE…PTPE) and 155–175 (QAPV…AKAS). Low complexity predominate over residues 111-132 (EAPATSSEALTTPTTPEAPTPE).

The protein belongs to the TatB family. In terms of assembly, the Tat system comprises two distinct complexes: a TatABC complex, containing multiple copies of TatA, TatB and TatC subunits, and a separate TatA complex, containing only TatA subunits. Substrates initially bind to the TatABC complex, which probably triggers association of the separate TatA complex to form the active translocon.

It localises to the cell inner membrane. Its function is as follows. Part of the twin-arginine translocation (Tat) system that transports large folded proteins containing a characteristic twin-arginine motif in their signal peptide across membranes. Together with TatC, TatB is part of a receptor directly interacting with Tat signal peptides. TatB may form an oligomeric binding site that transiently accommodates folded Tat precursor proteins before their translocation. The sequence is that of Sec-independent protein translocase protein TatB from Bradyrhizobium diazoefficiens (strain JCM 10833 / BCRC 13528 / IAM 13628 / NBRC 14792 / USDA 110).